The following is a 71-amino-acid chain: MLYPPINELLDKVDSRYTLVVAAAKRARQLIDGAVPKIEMPYSKKPVSIATQEIYESYVLYTSGEDETDIE.

The protein belongs to the RNA polymerase subunit omega family. In terms of assembly, the RNAP catalytic core consists of 2 alpha, 1 beta, 1 beta' and 1 omega subunit. When a sigma factor is associated with the core the holoenzyme is formed, which can initiate transcription.

It catalyses the reaction RNA(n) + a ribonucleoside 5'-triphosphate = RNA(n+1) + diphosphate. Its function is as follows. Promotes RNA polymerase assembly. Latches the N- and C-terminal regions of the beta' subunit thereby facilitating its interaction with the beta and alpha subunits. The protein is DNA-directed RNA polymerase subunit omega of Alkaliphilus oremlandii (strain OhILAs) (Clostridium oremlandii (strain OhILAs)).